Reading from the N-terminus, the 380-residue chain is Cytochrome b (380 aa).

Helical transmembrane passes span 33 to 53 (FGSL…FLAM), 77 to 98 (WFIR…YLHI), 113 to 133 (WTIG…GYVL), and 178 to 198 (FFTF…VHLL). The heme b site is built by H83 and H97. Heme b-binding residues include H182 and H196. Position 201 (H201) interacts with a ubiquinone. Helical transmembrane passes span 226–246 (YKDL…ALFS), 288–308 (LGGV…PILH), 320–340 (LTQT…WIGG), and 347–367 (FVII…VLAP).

It belongs to the cytochrome b family. The cytochrome bc1 complex contains 3 respiratory subunits (MT-CYB, CYC1 and UQCRFS1), 2 core proteins (UQCRC1 and UQCRC2) and probably 6 low-molecular weight proteins. Heme b is required as a cofactor.

It localises to the mitochondrion inner membrane. In terms of biological role, component of the ubiquinol-cytochrome c reductase complex (complex III or cytochrome b-c1 complex) that is part of the mitochondrial respiratory chain. The b-c1 complex mediates electron transfer from ubiquinol to cytochrome c. Contributes to the generation of a proton gradient across the mitochondrial membrane that is then used for ATP synthesis. This is Cytochrome b (mt-cyb) from Lampris guttatus (Opah).